The chain runs to 95 residues: Large ribosomal subunit protein bL25 (95 aa).

Belongs to the bacterial ribosomal protein bL25 family. Part of the 50S ribosomal subunit; part of the 5S rRNA/L5/L18/L25 subcomplex. Contacts the 5S rRNA. Binds to the 5S rRNA independently of L5 and L18.

In terms of biological role, this is one of the proteins that binds to the 5S RNA in the ribosome where it forms part of the central protuberance. In Actinobacillus pleuropneumoniae serotype 5b (strain L20), this protein is Large ribosomal subunit protein bL25.